Here is a 355-residue protein sequence, read N- to C-terminus: MISAAIVGGTGYTGIELIRLLSAHPKVSIDLLTSRSEAGTRADEIFPSLRGISDIVFSDLGDETLATLQQCDVVFFATPHGVAMKQAEALTQAGVKVIDLAADFRLQSLSEFEHWYQQMHTCPDLLKTAVYGLPEVNRAKIAEALVVGNPGCYPTTAILGLKPIIEAQNKQSKQLIESRIVIDAKSGVSGAGRQASLALNYAESTDNFKAYSVEGHRHLPEIEQGVAQLLDSQFKHRIRFLPHLVPMIRGMLSSIHMELTDAGALVDWQQVFEQSYASEQFIDVMPKGLYPDTRSVRASNRLRIAVHQDNERAELTVIVVQDNLVKGAAGQAVQNMNVMFGLDESLGLNFAPIVP.

Residue Cys152 is part of the active site.

The protein belongs to the NAGSA dehydrogenase family. Type 1 subfamily.

It is found in the cytoplasm. The enzyme catalyses N-acetyl-L-glutamate 5-semialdehyde + phosphate + NADP(+) = N-acetyl-L-glutamyl 5-phosphate + NADPH + H(+). It participates in amino-acid biosynthesis; L-arginine biosynthesis; N(2)-acetyl-L-ornithine from L-glutamate: step 3/4. Functionally, catalyzes the NADPH-dependent reduction of N-acetyl-5-glutamyl phosphate to yield N-acetyl-L-glutamate 5-semialdehyde. The polypeptide is N-acetyl-gamma-glutamyl-phosphate reductase (Psychrobacter cryohalolentis (strain ATCC BAA-1226 / DSM 17306 / VKM B-2378 / K5)).